The sequence spans 334 residues: Beta-hexosaminidase (334 aa).

Residues Asp60, Arg68, Arg133, and 163-164 (KH) contribute to the substrate site. His176 acts as the Proton donor/acceptor in catalysis. Asp247 functions as the Nucleophile in the catalytic mechanism.

Belongs to the glycosyl hydrolase 3 family. NagZ subfamily.

The protein localises to the cytoplasm. It catalyses the reaction Hydrolysis of terminal non-reducing N-acetyl-D-hexosamine residues in N-acetyl-beta-D-hexosaminides.. It participates in cell wall biogenesis; peptidoglycan recycling. In terms of biological role, plays a role in peptidoglycan recycling by cleaving the terminal beta-1,4-linked N-acetylglucosamine (GlcNAc) from peptide-linked peptidoglycan fragments, giving rise to free GlcNAc, anhydro-N-acetylmuramic acid and anhydro-N-acetylmuramic acid-linked peptides. This chain is Beta-hexosaminidase, found in Xanthomonas oryzae pv. oryzae (strain KACC10331 / KXO85).